Here is a 97-residue protein sequence, read N- to C-terminus: UPF0298 protein MGAS9429_Spy0329 (97 aa).

This sequence belongs to the UPF0298 family.

It is found in the cytoplasm. The polypeptide is UPF0298 protein MGAS9429_Spy0329 (Streptococcus pyogenes serotype M12 (strain MGAS9429)).